A 132-amino-acid chain; its full sequence is Secreted RxLR effector protein BLR08 (132 aa).

The N-terminal stretch at 1-22 is a signal peptide; that stretch reads MRHKCLLAMAVVASMAFYSVIS. Asn-25 carries N-linked (GlcNAc...) asparagine glycosylation. The interval 36-57 is disordered; sequence NRRLRPRVEPTANELDKQSDVD. Residues 37-83 carry the RxLR-dEER motif; the sequence is RRLRPRVEPTANELDKQSDVDTKLEADRRLGYPGESGFMLEGELEER. Residues 111–131 traverse the membrane as a helical segment; the sequence is FFLGLFASVIGVSIISACYGI.

The protein belongs to the RxLR effector family. In terms of assembly, interacts with host transcription factor NAC069.

The protein resides in the secreted. The protein localises to the host endoplasmic reticulum membrane. Its function is as follows. Secreted effector that inhibits stress-induced relocalization of the transcription factor NAC069 to the nucleus, thus affecting its broad role in abiotic and biotic stress responses. The chain is Secreted RxLR effector protein BLR08 from Bremia lactucae (Lettuce downy mildew).